A 212-amino-acid chain; its full sequence is MVSETPEDAIVSRPEAQGCVFGVDEAGRGPLAGPVVAAAVVLGDAYPKGLDDSKKLTAKRRAVLDEDIRKTCGWGVGVVDVEEIDTLNILGATMRAMSLAVQGLAAKLGGDPDMVLIDGNLTPHGRCDLWQWEAQAIIGGDGIEPAISAASIVAKEWRDRIMTEAAQDYPEYGWLSNKGYGTAQHLEALRLHGPTPLHRRSFAPVAQQELFR.

The 195-residue stretch at 18–212 (GCVFGVDEAG…APVAQQELFR (195 aa)) folds into the RNase H type-2 domain. A divalent metal cation-binding residues include aspartate 24, glutamate 25, and aspartate 118.

This sequence belongs to the RNase HII family. It depends on Mn(2+) as a cofactor. Mg(2+) serves as cofactor.

Its subcellular location is the cytoplasm. It carries out the reaction Endonucleolytic cleavage to 5'-phosphomonoester.. Functionally, endonuclease that specifically degrades the RNA of RNA-DNA hybrids. The polypeptide is Ribonuclease HII (Erythrobacter litoralis (strain HTCC2594)).